The chain runs to 484 residues: Adenylosuccinate lyase (484 aa).

An N-acetylalanine modification is found at Ala2. Substrate contacts are provided by residues 20 to 21, 85 to 87, and 111 to 112; these read RY, RHD, and TS. Lys147 is subject to N6-acetyllysine. His159 serves as the catalytic Proton donor/acceptor. Substrate is bound at residue Gln241. The active-site Proton donor/acceptor is the Ser289. An N6-acetyllysine modification is found at Lys295. Arg303, Arg329, Ser334, and Arg338 together coordinate substrate. Lys415 is covalently cross-linked (Glycyl lysine isopeptide (Lys-Gly) (interchain with G-Cter in SUMO1)).

It belongs to the lyase 1 family. Adenylosuccinate lyase subfamily. As to quaternary structure, homotetramer. Residues from neighboring subunits contribute catalytic and substrate-binding residues to each active site.

The enzyme catalyses N(6)-(1,2-dicarboxyethyl)-AMP = fumarate + AMP. The catalysed reaction is (2S)-2-[5-amino-1-(5-phospho-beta-D-ribosyl)imidazole-4-carboxamido]succinate = 5-amino-1-(5-phospho-beta-D-ribosyl)imidazole-4-carboxamide + fumarate. Its pathway is purine metabolism; AMP biosynthesis via de novo pathway; AMP from IMP: step 2/2. The protein operates within purine metabolism; IMP biosynthesis via de novo pathway; 5-amino-1-(5-phospho-D-ribosyl)imidazole-4-carboxamide from 5-amino-1-(5-phospho-D-ribosyl)imidazole-4-carboxylate: step 2/2. In terms of biological role, catalyzes two non-sequential steps in de novo AMP synthesis: converts (S)-2-(5-amino-1-(5-phospho-D-ribosyl)imidazole-4-carboxamido)succinate (SAICAR) to fumarate plus 5-amino-1-(5-phospho-D-ribosyl)imidazole-4-carboxamide, and thereby also contributes to de novo IMP synthesis, and converts succinyladenosine monophosphate (SAMP) to AMP and fumarate. The polypeptide is Adenylosuccinate lyase (Adsl) (Mus musculus (Mouse)).